Consider the following 482-residue polypeptide: Glycogen synthase (482 aa).

Lys-20 contributes to the ADP-alpha-D-glucose binding site.

Belongs to the glycosyltransferase 1 family. Bacterial/plant glycogen synthase subfamily.

It catalyses the reaction [(1-&gt;4)-alpha-D-glucosyl](n) + ADP-alpha-D-glucose = [(1-&gt;4)-alpha-D-glucosyl](n+1) + ADP + H(+). Its pathway is glycan biosynthesis; glycogen biosynthesis. Synthesizes alpha-1,4-glucan chains using ADP-glucose. This chain is Glycogen synthase, found in Aliivibrio salmonicida (strain LFI1238) (Vibrio salmonicida (strain LFI1238)).